We begin with the raw amino-acid sequence, 282 residues long: D-alanine aminotransferase (282 aa).

Y32 contacts substrate. Residue R51 coordinates pyridoxal 5'-phosphate. Substrate is bound by residues R99 and H101. K146 (proton acceptor) is an active-site residue. K146 carries the N6-(pyridoxal phosphate)lysine modification. Pyridoxal 5'-phosphate is bound at residue E178.

The protein belongs to the class-IV pyridoxal-phosphate-dependent aminotransferase family. As to quaternary structure, homodimer. Pyridoxal 5'-phosphate is required as a cofactor.

It carries out the reaction D-alanine + 2-oxoglutarate = D-glutamate + pyruvate. Functionally, acts on the D-isomers of alanine, leucine, aspartate, glutamate, aminobutyrate, norvaline and asparagine. The enzyme transfers an amino group from a substrate D-amino acid to the pyridoxal phosphate cofactor to form pyridoxamine and an alpha-keto acid in the first half-reaction. The second half-reaction is the reverse of the first, transferring the amino group from the pyridoxamine to a second alpha-keto acid to form the product D-amino acid via a ping-pong mechanism. This is an important process in the formation of D-alanine and D-glutamate, which are essential bacterial cell wall components. In Staphylococcus epidermidis (strain ATCC 35984 / DSM 28319 / BCRC 17069 / CCUG 31568 / BM 3577 / RP62A), this protein is D-alanine aminotransferase (dat).